We begin with the raw amino-acid sequence, 558 residues long: PE cleavage protein A (558 aa).

The 93-residue stretch at 1 to 93 folds into the PE domain; sequence MSFLVVVPEF…SGSYAAAEAT (93 aa). The active site involves aspartate 297.

The protein belongs to the mycobacterial PE family. PGRS subfamily. Post-translationally, undergoes auto-proteolytic processing.

The protein resides in the secreted. It localises to the cell surface. Functionally, aspartic protease that processes the lipase LipY and other PE_PGRS proteins. Can also cleave itself. The sequence is that of PE cleavage protein A from Mycobacterium tuberculosis (strain CDC 1551 / Oshkosh).